Here is a 213-residue protein sequence, read N- to C-terminus: Imidazole glycerol phosphate synthase subunit HisH (213 aa).

The region spanning 4–213 (SIAIVDYGMG…LYRNFVHWKP (210 aa)) is the Glutamine amidotransferase type-1 domain. Cys83 acts as the Nucleophile in catalysis. Active-site residues include His193 and Glu195.

In terms of assembly, heterodimer of HisH and HisF.

The protein localises to the cytoplasm. It carries out the reaction 5-[(5-phospho-1-deoxy-D-ribulos-1-ylimino)methylamino]-1-(5-phospho-beta-D-ribosyl)imidazole-4-carboxamide + L-glutamine = D-erythro-1-(imidazol-4-yl)glycerol 3-phosphate + 5-amino-1-(5-phospho-beta-D-ribosyl)imidazole-4-carboxamide + L-glutamate + H(+). The catalysed reaction is L-glutamine + H2O = L-glutamate + NH4(+). It functions in the pathway amino-acid biosynthesis; L-histidine biosynthesis; L-histidine from 5-phospho-alpha-D-ribose 1-diphosphate: step 5/9. Functionally, IGPS catalyzes the conversion of PRFAR and glutamine to IGP, AICAR and glutamate. The HisH subunit catalyzes the hydrolysis of glutamine to glutamate and ammonia as part of the synthesis of IGP and AICAR. The resulting ammonia molecule is channeled to the active site of HisF. The polypeptide is Imidazole glycerol phosphate synthase subunit HisH (Burkholderia multivorans (strain ATCC 17616 / 249)).